We begin with the raw amino-acid sequence, 237 residues long: Ribosomal RNA small subunit methyltransferase G (237 aa).

S-adenosyl-L-methionine-binding positions include Gly-78, Phe-83, 129–130, and Arg-148; that span reads AE. The interval 218-237 is disordered; sequence KKETPNKYPRKAGMPNKRPL.

It belongs to the methyltransferase superfamily. RNA methyltransferase RsmG family.

It is found in the cytoplasm. Functionally, specifically methylates the N7 position of a guanine in 16S rRNA. This is Ribosomal RNA small subunit methyltransferase G from Streptococcus sanguinis (strain SK36).